We begin with the raw amino-acid sequence, 214 residues long: Octanoyltransferase (214 aa).

The region spanning 31–206 (KDDADEIWLL…QLAEQLGYNY (176 aa)) is the BPL/LPL catalytic domain. Substrate-binding positions include 70 to 77 (RGGQVTYH), 137 to 139 (SLG), and 150 to 152 (GLA). Cys168 acts as the Acyl-thioester intermediate in catalysis.

This sequence belongs to the LipB family.

The protein resides in the cytoplasm. It carries out the reaction octanoyl-[ACP] + L-lysyl-[protein] = N(6)-octanoyl-L-lysyl-[protein] + holo-[ACP] + H(+). The protein operates within protein modification; protein lipoylation via endogenous pathway; protein N(6)-(lipoyl)lysine from octanoyl-[acyl-carrier-protein]: step 1/2. Its function is as follows. Catalyzes the transfer of endogenously produced octanoic acid from octanoyl-acyl-carrier-protein onto the lipoyl domains of lipoate-dependent enzymes. Lipoyl-ACP can also act as a substrate although octanoyl-ACP is likely to be the physiological substrate. The protein is Octanoyltransferase of Marinomonas sp. (strain MWYL1).